We begin with the raw amino-acid sequence, 466 residues long: Alpha-1A adrenergic receptor (466 aa).

At 1 to 25 (MVFLSGNASDSSNCTHPPAPVNISK) the chain is on the extracellular side. N-linked (GlcNAc...) asparagine glycosylation is found at asparagine 7, asparagine 13, and asparagine 22. A helical transmembrane segment spans residues 26 to 51 (AILLGVILGGLILFGVLGNILVILSV). The Cytoplasmic portion of the chain corresponds to 52–63 (ACHRHLHSVTHY). Residues 64 to 89 (YIVNLAVADLLLTSTVLPFSAIFEIL) form a helical membrane-spanning segment. Over 90 to 99 (GYWAFGRVFC) the chain is Extracellular. The helical transmembrane segment at 100–122 (NIWAAVDVLCCTASIISLCVISI) threads the bilayer. At 123 to 143 (DRYIGVSYPLRYPTIVTQRRG) the chain is on the cytoplasmic side. Residues 144-168 (LRALLCVWAFSLVISVGPLFGWRQP) traverse the membrane as a helical segment. Topologically, residues 169–181 (APDDETICQINEE) are extracellular. A helical membrane pass occupies residues 182–205 (PGYVLFSALGSFYVPLTIILAMYC). The Cytoplasmic segment spans residues 206 to 272 (RVYVVAKRES…KFSREKKAAK (67 aa)). A helical transmembrane segment spans residues 273 to 297 (TLGIVVGCFVLCWLPFFLVMPIGSF). Over 298–304 (FPDFKPP) the chain is Extracellular. Residues 305–329 (ETVFKIVFWLGYLNSCINPIIYPCS) form a helical membrane-spanning segment. Residues 330–466 (SQEFKKAFQN…ISLSENGEEV (137 aa)) are Cytoplasmic-facing. A Nuclear localization signal motif is present at residues 334–349 (KKAFQNVLKIQCLRRK). A lipid anchor (S-palmitoyl cysteine) is attached at cysteine 345.

The protein belongs to the G-protein coupled receptor 1 family. Adrenergic receptor subfamily. ADRA1A sub-subfamily. As to quaternary structure, homo- and heterooligomer. Heterooligomerizes with ADRA1B homooligomers in cardiac myocytes. Interacts with CAVIN4. In terms of tissue distribution, abundant in liver, vas deferens, brain, and aorta, but not in heart.

It localises to the nucleus membrane. Its subcellular location is the cell membrane. The protein localises to the cytoplasm. The protein resides in the membrane. It is found in the caveola. Its function is as follows. This alpha-adrenergic receptor mediates its action by association with G proteins that activate a phosphatidylinositol-calcium second messenger system. Its effect is mediated by G(q) and G(11) proteins. Nuclear ADRA1A-ADRA1B heterooligomers regulate phenylephrine (PE)-stimulated ERK signaling in cardiac myocytes. This is Alpha-1A adrenergic receptor (ADRA1A) from Oryctolagus cuniculus (Rabbit).